We begin with the raw amino-acid sequence, 286 residues long: Protein WVD2-like 1 (286 aa).

The interval 31–101 (ETDEEFEVKE…ENKKHIDDED (71 aa)) is disordered. Position 32 is a phosphothreonine (Thr-32). Positions 38–47 (VKECTEEKSL) are enriched in basic and acidic residues. A coiled-coil region spans residues 131 to 182 (AQRAEKRKEYYQKLEEKNQALEAERNELEQRQKDEQEAALKQLRKNLKFKAK). The disordered stretch occupies residues 186 to 286 (NFYYEAPPAK…KPVNESSEEA (101 aa)). Polar residues predominate over residues 234–247 (TVSNRNRHSTGTVQ).

This sequence belongs to the TPX2 family.

It is found in the cytoplasm. The protein localises to the cytoskeleton. In terms of biological role, microtubule-associated protein (MAP) that regulates the orientation of interphase cortical microtubules. Modulates both rotational polarity and anisotropic cell expansion during organ growth. Promotes clockwise root and etiolated hypocotyls coiling, clockwise leaf curling, but left-handed petiole twisting. This chain is Protein WVD2-like 1 (WDL1), found in Arabidopsis thaliana (Mouse-ear cress).